Consider the following 348-residue polypeptide: Fructose-1,6-bisphosphatase class 1 2 (348 aa).

Residues Glu-93, Asp-117, Leu-119, and Asp-120 each coordinate Mg(2+). Substrate is bound by residues 120 to 123 (DGSS), Asn-213, Tyr-244, and Lys-274. Residue Glu-280 participates in Mg(2+) binding.

This sequence belongs to the FBPase class 1 family. As to quaternary structure, homotetramer. The cofactor is Mg(2+).

Its subcellular location is the cytoplasm. The catalysed reaction is beta-D-fructose 1,6-bisphosphate + H2O = beta-D-fructose 6-phosphate + phosphate. Its pathway is carbohydrate biosynthesis; gluconeogenesis. The sequence is that of Fructose-1,6-bisphosphatase class 1 2 from Christiangramia forsetii (strain DSM 17595 / CGMCC 1.15422 / KT0803) (Gramella forsetii).